Consider the following 747-residue polypeptide: MNLKTKFFLKVISVIAPIVIIPTILANCAHINSNELDNAKTNLKGSVEVVNINPYKTKQMLASNINKEQINSYFIFIFNLIKTNQKIEEKILDKNDYEILNWAANDNDGTLGINIYIKTTKQSYLINTKPVFLTDKQNNYLQELKYKTPAVYSIDEILKFSNNPYNLIHNNPYYREQLLRAKIYFNQNEANVDDSKLYMNKIGYSEFGSDVQKRLENAFKIRYDEQNIYQINSPQILAKETKTLTSYIDKKTNNNYSINIELIKKLIQINPFGKLPKNFAQLINLIKKEEYPKFLTITKNESVDNIVVKDIYYRIIDRYAKLEFILEIYNKKTKQTVYLSANFNQKNSGLLKNEDYFQYIFDRTISLDLLTTKDGKNVELNSGTGWIVDRIIDDSLPKNKIKLLIATNNHVMGWSNLAISKDNRMKSRWFNKQEYINYLENNAGFISSNIYEDKDRYQYLLWGTAPLKSPVSNKYNSLSGISFSNLAKVYNITNQNFINRAWYIPQLSANGIKINENLRTWYQINQEDIKSIKNGTLDFVLVPMVFDIEDIKEKLPNYYKVLNTKDEANWYIGLGNSKKYLPQLQLFSGGYPGDVNPNSSAIVSWRGSKSYGSLIQAFDREIKNESILDYYGPKQINNIDGYQKVGEGYLNKLFNVGTRVITSDEIGDLGSGSSGSMIIDSNFNLVGIHFASLNSRAYGAPNDSMIGNLFVAQSQDLSGDIDVRAAVIKKLKAENIYTYKLNPKVSS.

Residues 7 to 27 (FFLKVISVIAPIVIIPTILAN) form a helical membrane-spanning segment.

The protein resides in the membrane. This is an uncharacterized protein from Ureaplasma parvum serovar 3 (strain ATCC 700970).